The sequence spans 276 residues: Urease accessory protein UreD (276 aa).

Belongs to the UreD family. In terms of assembly, ureD, UreF and UreG form a complex that acts as a GTP-hydrolysis-dependent molecular chaperone, activating the urease apoprotein by helping to assemble the nickel containing metallocenter of UreC. The UreE protein probably delivers the nickel.

The protein localises to the cytoplasm. Its function is as follows. Required for maturation of urease via the functional incorporation of the urease nickel metallocenter. In Bradyrhizobium diazoefficiens (strain JCM 10833 / BCRC 13528 / IAM 13628 / NBRC 14792 / USDA 110), this protein is Urease accessory protein UreD.